A 429-amino-acid polypeptide reads, in one-letter code: Palmitoyltransferase SWF1 (429 aa).

The Lumenal portion of the chain corresponds to 1–3 (MGT). Residues 4-24 (IAIIAAVILGISFMTFVAFFG) form a helical membrane-spanning segment. At 25–79 (RLPALRNTPISFLHRLIWIHLPNGILTVDRTLTNGRLTTSLTRLGRHLWYDQHPT) the chain is on the cytoplasmic side. A helical membrane pass occupies residues 80-100 (ILIFFFLLLSVGEYLYLPVAW). At 101 to 112 (PHFSFTHKFFGT) the chain is on the lumenal side. The chain crosses the membrane as a helical span at residues 113 to 133 (IAILCPYIFLYLSAYTDPGVI). Residues 134 to 201 (NAKTHVREMA…CVGANNQRWF (68 aa)) lie on the Cytoplasmic side of the membrane. A DHHC domain is found at 156-206 (TSCETCHLLKPARSKHCSICKKCVGRMDHHCIFINNCVGANNQRWFILLLL). The helical transmembrane segment at 202-222 (ILLLLSTAILTLYGGVLGLVI) threads the bilayer. Topologically, residues 223-274 (IRAKIQARFPYWTLMPWWTSTQAWNSGDLDFHRWLLLWSWGLQSGVAMGGVT) are lumenal. Residues 275-295 (LLALLTTPLVWGLLGYHLWLV) form a helical membrane-spanning segment. The Cytoplasmic portion of the chain corresponds to 296–429 (YCGTTTNESM…ERGRNRRRSS (134 aa)). A compositionally biased stretch (basic and acidic residues) spans 408-421 (GRSPVDEREFGRER). A disordered region spans residues 408–429 (GRSPVDEREFGRERGRNRRRSS).

The protein belongs to the DHHC palmitoyltransferase family. SWF1 subfamily.

The protein resides in the endoplasmic reticulum membrane. The catalysed reaction is L-cysteinyl-[protein] + hexadecanoyl-CoA = S-hexadecanoyl-L-cysteinyl-[protein] + CoA. Functionally, palmitoyltransferase that targets several endosomal SNAREs. Palmitoylates the SNAREs at cysteine residues close to the cytoplasmic end of their transmembrane domain. May have a role in the cellular quality control of transmembrane domain-containing proteins. This Neurospora crassa (strain ATCC 24698 / 74-OR23-1A / CBS 708.71 / DSM 1257 / FGSC 987) protein is Palmitoyltransferase SWF1 (swf-1).